A 128-amino-acid polypeptide reads, in one-letter code: Fluoride-specific ion channel FluC (128 aa).

4 consecutive transmembrane segments (helical) span residues 10 to 30, 40 to 60, 71 to 91, and 102 to 122; these read FLAVAIGAALGACARWLAGLW, TLLVNLAGGYLIGLALAVLLA, AAVTGFLGGLTTFSTFSAETV, and ALGYAALSLVGSLALTALGLA. Na(+) is bound by residues Gly-78 and Thr-81.

The protein belongs to the fluoride channel Fluc/FEX (TC 1.A.43) family.

It is found in the cell inner membrane. It catalyses the reaction fluoride(in) = fluoride(out). Na(+) is not transported, but it plays an essential structural role and its presence is essential for fluoride channel function. In terms of biological role, fluoride-specific ion channel. Important for reducing fluoride concentration in the cell, thus reducing its toxicity. The protein is Fluoride-specific ion channel FluC of Bordetella petrii (strain ATCC BAA-461 / DSM 12804 / CCUG 43448).